The following is a 468-amino-acid chain: UDP-N-acetylmuramate--L-alanine ligase (468 aa).

Gly118 to Thr124 serves as a coordination point for ATP.

It belongs to the MurCDEF family.

Its subcellular location is the cytoplasm. It carries out the reaction UDP-N-acetyl-alpha-D-muramate + L-alanine + ATP = UDP-N-acetyl-alpha-D-muramoyl-L-alanine + ADP + phosphate + H(+). The protein operates within cell wall biogenesis; peptidoglycan biosynthesis. Functionally, cell wall formation. This Roseobacter denitrificans (strain ATCC 33942 / OCh 114) (Erythrobacter sp. (strain OCh 114)) protein is UDP-N-acetylmuramate--L-alanine ligase.